The primary structure comprises 221 residues: Epididymal secretory glutathione peroxidase (221 aa).

A signal peptide spans 1–21 (MTTQLRVVHLLPLLLACFVQT). The active site involves Cys-73.

Belongs to the glutathione peroxidase family. As to expression, epididymis.

It is found in the secreted. It catalyses the reaction 2 glutathione + H2O2 = glutathione disulfide + 2 H2O. In terms of biological role, protects cells and enzymes from oxidative damage, by catalyzing the reduction of hydrogen peroxide, lipid peroxides and organic hydroperoxide, by glutathione. May constitute a glutathione peroxidase-like protective system against peroxide damage in sperm membrane lipids. The sequence is that of Epididymal secretory glutathione peroxidase (GPX5) from Macaca fascicularis (Crab-eating macaque).